A 375-amino-acid polypeptide reads, in one-letter code: Peptide-N(4)-(N-acetyl-beta-glucosaminyl)asparagine amidase (375 aa).

Residues C129, C132, C163, and C166 each contribute to the Zn(2+) site. The active-site Nucleophile is C189. Catalysis depends on residues H219 and D236. Residue E239 participates in substrate binding. The interval 345–375 is disordered; the sequence is KIEVSRTHNIPTGRQTGDAEWTKSRGEDGNE. The span at 364 to 375 shows a compositional bias: basic and acidic residues; that stretch reads EWTKSRGEDGNE.

Belongs to the transglutaminase-like superfamily. PNGase family. Zn(2+) is required as a cofactor.

Its subcellular location is the cytoplasm. The catalysed reaction is Hydrolysis of an N(4)-(acetyl-beta-D-glucosaminyl)asparagine residue in which the glucosamine residue may be further glycosylated, to yield a (substituted) N-acetyl-beta-D-glucosaminylamine and a peptide containing an aspartate residue.. In terms of biological role, specifically deglycosylates the denatured form of N-linked glycoproteins in the cytoplasm and assists their proteasome-mediated degradation. Cleaves the beta-aspartyl-glucosamine (GlcNAc) of the glycan and the amide side chain of Asn, converting Asn to Asp. Prefers proteins containing high-mannose over those bearing complex type oligosaccharides. Can recognize misfolded proteins in the endoplasmic reticulum that are exported to the cytosol to be destroyed and deglycosylate them, while it has no activity toward native proteins. Deglycosylation is a prerequisite for subsequent proteasome-mediated degradation of some, but not all, misfolded glycoproteins. This Debaryomyces hansenii (strain ATCC 36239 / CBS 767 / BCRC 21394 / JCM 1990 / NBRC 0083 / IGC 2968) (Yeast) protein is Peptide-N(4)-(N-acetyl-beta-glucosaminyl)asparagine amidase (PNG1).